A 261-amino-acid polypeptide reads, in one-letter code: Cytochrome c oxidase subunit 3 (261 aa).

Over 1-15 (MTHQTHAYHMVNPSP) the chain is Mitochondrial matrix. The helical transmembrane segment at 16–34 (WPLTGALSALLMTSGLIMW) threads the bilayer. Topologically, residues 35–40 (FHFNST) are mitochondrial intermembrane. The helical transmembrane segment at 41 to 66 (TLLTLGLTTNMLTMYQWWRDVIREST) threads the bilayer. The Mitochondrial matrix segment spans residues 67–72 (FQGHHT). A helical membrane pass occupies residues 73–105 (PTVQKGLRYGMILFIISEVLFFTGFFWAFYHSS). The Mitochondrial intermembrane segment spans residues 106–128 (LAPTPELGGCWPPTGIHPLNPLE). The chain crosses the membrane as a helical span at residues 129–152 (VPLLNTSVLLASGVSITWAHHSLM). The Mitochondrial matrix segment spans residues 153–155 (EGN). Residues 156-183 (RNPMLQALFITIALGIYFTLLQASEYYE) traverse the membrane as a helical segment. The Mitochondrial intermembrane portion of the chain corresponds to 184-190 (APFTISD). Residues 191–223 (GVYGSTFFVATGFHGLHVIIGSTFLIVCFFRQL) traverse the membrane as a helical segment. Topologically, residues 224 to 232 (KFHFTSNHH) are mitochondrial matrix. Residues 233–256 (FGFEAAAWYWHFVDVVWLFLYVSI) form a helical membrane-spanning segment. Residues 257 to 261 (YWWGS) are Mitochondrial intermembrane-facing.

Belongs to the cytochrome c oxidase subunit 3 family. In terms of assembly, component of the cytochrome c oxidase (complex IV, CIV), a multisubunit enzyme composed of 14 subunits. The complex is composed of a catalytic core of 3 subunits MT-CO1, MT-CO2 and MT-CO3, encoded in the mitochondrial DNA, and 11 supernumerary subunits COX4I, COX5A, COX5B, COX6A, COX6B, COX6C, COX7A, COX7B, COX7C, COX8 and NDUFA4, which are encoded in the nuclear genome. The complex exists as a monomer or a dimer and forms supercomplexes (SCs) in the inner mitochondrial membrane with NADH-ubiquinone oxidoreductase (complex I, CI) and ubiquinol-cytochrome c oxidoreductase (cytochrome b-c1 complex, complex III, CIII), resulting in different assemblies (supercomplex SCI(1)III(2)IV(1) and megacomplex MCI(2)III(2)IV(2)).

The protein localises to the mitochondrion inner membrane. The enzyme catalyses 4 Fe(II)-[cytochrome c] + O2 + 8 H(+)(in) = 4 Fe(III)-[cytochrome c] + 2 H2O + 4 H(+)(out). Its function is as follows. Component of the cytochrome c oxidase, the last enzyme in the mitochondrial electron transport chain which drives oxidative phosphorylation. The respiratory chain contains 3 multisubunit complexes succinate dehydrogenase (complex II, CII), ubiquinol-cytochrome c oxidoreductase (cytochrome b-c1 complex, complex III, CIII) and cytochrome c oxidase (complex IV, CIV), that cooperate to transfer electrons derived from NADH and succinate to molecular oxygen, creating an electrochemical gradient over the inner membrane that drives transmembrane transport and the ATP synthase. Cytochrome c oxidase is the component of the respiratory chain that catalyzes the reduction of oxygen to water. Electrons originating from reduced cytochrome c in the intermembrane space (IMS) are transferred via the dinuclear copper A center (CU(A)) of subunit 2 and heme A of subunit 1 to the active site in subunit 1, a binuclear center (BNC) formed by heme A3 and copper B (CU(B)). The BNC reduces molecular oxygen to 2 water molecules using 4 electrons from cytochrome c in the IMS and 4 protons from the mitochondrial matrix. In Madoqua guentheri (Guenther's dik-dik), this protein is Cytochrome c oxidase subunit 3 (MT-CO3).